We begin with the raw amino-acid sequence, 542 residues long: TOM1-like protein 7 (542 aa).

The VHS domain occupies 29–158 (ATSELLRTPD…ELKRCGVKFP (130 aa)). Ser-161 bears the Phosphoserine mark. In terms of domain architecture, GAT spans 201-289 (EIESLSLSSL…VLARHDAIAS (89 aa)). The tract at residues 303–340 (RETSSSLKTCGAAALESADSESSSSSSSSESETDEVED) is disordered. Residues 314-332 (AAALESADSESSSSSSSSE) show a composition bias toward low complexity. Ser-521 bears the Phosphoserine mark. The segment at 522 to 542 (FPARATGTSGAATAATVDRQP) is disordered. The span at 524 to 542 (ARATGTSGAATAATVDRQP) shows a compositional bias: low complexity.

The protein belongs to the TOM1 family. Preferentially expressed in flowers.

It localises to the membrane. Functionally, might contribute to the loading of the ESCRT machinery. This chain is TOM1-like protein 7, found in Arabidopsis thaliana (Mouse-ear cress).